A 324-amino-acid chain; its full sequence is uncharacterized protein (324 aa).

Residues 1–58 enclose the HTH lysR-type domain; the sequence is MDIKVMEYAAEIARRQSFTKAAEHLHIAQPSLSQQIKKLEAELGLTLFHRSHGSVTLT. The segment at residues 18–37 is a DNA-binding region (H-T-H motif); it reads FTKAAEHLHIAQPSLSQQIK.

The protein belongs to the LysR transcriptional regulatory family.

This is an uncharacterized protein from Bacillus subtilis (strain 168).